The chain runs to 488 residues: UDP-N-acetylmuramate--L-alanine ligase (488 aa).

127–133 (GTHGKTT) contacts ATP.

This sequence belongs to the MurCDEF family.

Its subcellular location is the cytoplasm. It catalyses the reaction UDP-N-acetyl-alpha-D-muramate + L-alanine + ATP = UDP-N-acetyl-alpha-D-muramoyl-L-alanine + ADP + phosphate + H(+). Its pathway is cell wall biogenesis; peptidoglycan biosynthesis. Cell wall formation. In Shewanella oneidensis (strain ATCC 700550 / JCM 31522 / CIP 106686 / LMG 19005 / NCIMB 14063 / MR-1), this protein is UDP-N-acetylmuramate--L-alanine ligase.